A 411-amino-acid chain; its full sequence is Class E basic helix-loop-helix protein 40 (411 aa).

The interval 1-21 (MERIPSAQPPPTCLPKTPGLE) is disordered. An essential for interaction with BMAL1, E-box binding and repressor activity against the CLOCK-BMAL1 heterodimer region spans residues 1–139 (MERIPSAQPP…LSGKNIEAGQ (139 aa)). The 56-residue stretch at 52 to 107 (TYKLPHRLIEKKRRDRINECIAQLKDLLPEHLKLTTLGHLEKAVVLELTLKHVKAL) folds into the bHLH domain. The necessary for interaction with RXRA and repressor activity against RXRA stretch occupies residues 75–79 (LKDLL). Positions 142 to 175 (FCSGFQTCAREVLQYLAKHENTRDLKSSQLVTHL) constitute an Orange domain. Lys159 is covalently cross-linked (Glycyl lysine isopeptide (Lys-Gly) (interchain with G-Cter in SUMO1, SUMO2 and SUMO3)). Residue Lys167 forms a Glycyl lysine isopeptide (Lys-Gly) (interchain with G-Cter in SUMO2) linkage. Residues 186-293 (SASRKPLDSA…EPPTKKSRMQ (108 aa)) are disordered. Ser235 carries the phosphoserine modification. The span at 248–271 (ELEKGDLRSEQPYFKSDHGRRFTV) shows a compositional bias: basic and acidic residues. Residue Lys279 forms a Glycyl lysine isopeptide (Lys-Gly) (interchain with G-Cter in SUMO1); alternate linkage. Lys279 participates in a covalent cross-link: Glycyl lysine isopeptide (Lys-Gly) (interchain with G-Cter in SUMO1, SUMO2 and SUMO3); alternate. Lys279 participates in a covalent cross-link: Glycyl lysine isopeptide (Lys-Gly) (interchain with G-Cter in SUMO2); alternate. Lys288 participates in a covalent cross-link: Glycyl lysine isopeptide (Lys-Gly) (interchain with G-Cter in SUMO2). Position 383 is a phosphoserine (Ser383).

As to quaternary structure, homodimer. Heterodimer with BHLHE41/DEC2. Interacts with TCF3/E47. Interacts with ubiquitin-conjugating enzyme UBE2I/UBC9. Interacts with HDAC1, SUMO1, RXRA and BMAL1. Ubiquitinated; which may lead to proteasomal degradation. In terms of processing, sumoylation inhibits its ubiquitination and promotes its negative regulation of the CLOCK-BMAL1 heterodimer transcriptional activator activity. As to expression, expressed in heart, spleen, lung, liver, muscle, kidney, uterus and gut. Highly expressed in the cerebral cortex, especially in the fifth layer, thalamus, superior colliculus, olfactory bulb, piriform cortex, hippocampus and hypothalamic nuclei.

It localises to the cytoplasm. It is found in the nucleus. In terms of biological role, transcriptional repressor involved in the regulation of the circadian rhythm by negatively regulating the activity of the clock genes and clock-controlled genes. Acts as the negative limb of a novel autoregulatory feedback loop (DEC loop) which differs from the one formed by the PER and CRY transcriptional repressors (PER/CRY loop). Both these loops are interlocked as it represses the expression of PER1/2 and in turn is repressed by PER1/2 and CRY1/2. Represses the activity of the circadian transcriptional activator: CLOCK-BMAL1|BMAL2 heterodimer by competing for the binding to E-box elements (5'-CACGTG-3') found within the promoters of its target genes. Negatively regulates its own expression and the expression of DBP and BHLHE41/DEC2. Acts as a corepressor of RXR and the RXR-LXR heterodimers and represses the ligand-induced RXRA and NR1H3/LXRA transactivation activity. May be involved in the regulation of chondrocyte differentiation via the cAMP pathway. Represses the transcription of NR0B2 and attentuates the transactivation of NR0B2 by the CLOCK-BMAL1 complex. Drives the circadian rhythm of blood pressure through transcriptional repression of ATP1B1 in the cardiovascular system. The polypeptide is Class E basic helix-loop-helix protein 40 (Bhlhe40) (Rattus norvegicus (Rat)).